A 339-amino-acid polypeptide reads, in one-letter code: Ornithine carbamoyltransferase, catabolic (339 aa).

Carbamoyl phosphate contacts are provided by residues 57–60 (STRT), Gln84, Arg108, and 135–138 (HPTQ). L-ornithine-binding positions include Asn167, Asp231, and 235-236 (SM). Carbamoyl phosphate-binding positions include 274–275 (CL) and Arg319.

Belongs to the aspartate/ornithine carbamoyltransferase superfamily. OTCase family.

The protein resides in the cytoplasm. The catalysed reaction is carbamoyl phosphate + L-ornithine = L-citrulline + phosphate + H(+). It functions in the pathway amino-acid degradation; L-arginine degradation via ADI pathway; carbamoyl phosphate from L-arginine: step 2/2. Functionally, reversibly catalyzes the transfer of the carbamoyl group from carbamoyl phosphate (CP) to the N(epsilon) atom of ornithine (ORN) to produce L-citrulline. This Enterococcus faecalis (strain ATCC 700802 / V583) protein is Ornithine carbamoyltransferase, catabolic (arcB).